We begin with the raw amino-acid sequence, 315 residues long: Methionyl-tRNA formyltransferase (315 aa).

Residue 113–116 (SLLP) participates in (6S)-5,6,7,8-tetrahydrofolate binding.

Belongs to the Fmt family.

It carries out the reaction L-methionyl-tRNA(fMet) + (6R)-10-formyltetrahydrofolate = N-formyl-L-methionyl-tRNA(fMet) + (6S)-5,6,7,8-tetrahydrofolate + H(+). Attaches a formyl group to the free amino group of methionyl-tRNA(fMet). The formyl group appears to play a dual role in the initiator identity of N-formylmethionyl-tRNA by promoting its recognition by IF2 and preventing the misappropriation of this tRNA by the elongation apparatus. In Escherichia coli O6:K15:H31 (strain 536 / UPEC), this protein is Methionyl-tRNA formyltransferase.